The following is a 694-amino-acid chain: Cyclic nucleotide-gated channel alpha-3 (694 aa).

Polar residues-rich tracts occupy residues 1–11 and 112–123; these read MAKINTQYSHP and SQESNAQANVGS. Disordered regions lie at residues 1 to 24 and 109 to 152; these read MAKI…SDRD and EVSS…EEKK. Residues 1 to 170 are Cytoplasmic-facing; it reads MAKINTQYSH…VDPSSNLYYR (170 aa). The helical transmembrane segment at 171 to 192 threads the bilayer; it reads WLTAIALPVFYNWYLLICRACF. The Extracellular portion of the chain corresponds to 193–198; the sequence is DELQSE. A helical transmembrane segment spans residues 199–219; it reads YLMLWLVLDYSADVLYVLDVL. Topologically, residues 220-246 are cytoplasmic; the sequence is VRARTGFLEQGLMVSDTNRLWQHYKTT. The helical transmembrane segment at 247-266 threads the bilayer; that stretch reads TQFKLDVLSLVPTDLAYLKV. Residues 267-270 lie on the Extracellular side of the membrane; the sequence is GTNY. The chain crosses the membrane as a helical span at residues 271-288; it reads PEVRFNRLLKFSRLFEFF. At 289 to 298 the chain is on the cytoplasmic side; it reads DRTETRTNYP. An ion conduction pathway region spans residues 298–406; it reads PNMFRIGNLV…GNVGSMISNM (109 aa). The chain crosses the membrane as a helical span at residues 299 to 321; the sequence is NMFRIGNLVLYILIIIHWNACIY. The Extracellular portion of the chain corresponds to 322–347; that stretch reads FAISKFIGFGTDSWVYPNISIPEHGR. A glycan (N-linked (GalNAc...) asparagine) is linked at N339. 2 helical membrane-spanning segments follow: residues 348–378 and 379–403; these read LSRK…DEEY and LFVV…GSMI. Positions 365–368 are selectivity filter; it reads TIGE. The Cytoplasmic segment spans residues 404–694; the sequence is SNMNASRAEF…DATKTEDKQQ (291 aa). Residues 408–485 form a C-linker region; it reads ASRAEFQAKI…TLKKVRIFQD (78 aa). Positions 488–608 are cyclic nucleotide-binding domain; that stretch reads AGLLVELVLK…EEKGRQILMK (121 aa). Residues G548, E549, S551, R564, T565, and D609 each contribute to the 3',5'-cyclic GMP site. Residues 626-669 are a coiled coil; the sequence is LEEKVEQLGSSLDTLQTRFARLLAEYNATQMKMKQRLSQLESQV. The interval 662–694 is disordered; it reads LSQLESQVKGGGDKPLADGEVPGDATKTEDKQQ.

Belongs to the cyclic nucleotide-gated cation channel (TC 1.A.1.5) family. CNGA3 subfamily. As to quaternary structure, forms heterotetrameric channels composed of CNGA3 and CNGB3 subunits with 3:1 stoichiometry. Prominently expressed in retina.

The protein localises to the cell membrane. It catalyses the reaction Ca(2+)(in) = Ca(2+)(out). It carries out the reaction Na(+)(in) = Na(+)(out). The enzyme catalyses K(+)(in) = K(+)(out). The catalysed reaction is NH4(+)(in) = NH4(+)(out). It catalyses the reaction Rb(+)(in) = Rb(+)(out). It carries out the reaction Li(+)(in) = Li(+)(out). The enzyme catalyses Cs(+)(in) = Cs(+)(out). Inhibited by L-cis-diltiazem. In terms of biological role, pore-forming subunit of the cone cyclic nucleotide-gated channel. Mediates cone photoresponses at bright light converting transient changes in intracellular cGMP levels into electrical signals. In the dark, cGMP levels are high and keep the channel open enabling a steady inward current carried by Na(+) and Ca(2+) ions that leads to membrane depolarization and neurotransmitter release from synaptic terminals. Upon photon absorption cGMP levels decline leading to channel closure and membrane hyperpolarization that ultimately slows neurotransmitter release and signals the presence of light, the end point of the phototransduction cascade. Pore-forming subunit of the gustatory cyclic nucleotide-gated channel. In the taste buds, may sense oral extracellular pH and conduct ion currents that modulate the excitability of taste cells. Conducts cGMP- and cAMP-gated ion currents, with permeability for monovalent and divalent cations. In Homo sapiens (Human), this protein is Cyclic nucleotide-gated channel alpha-3.